Here is a 305-residue protein sequence, read N- to C-terminus: MSQRELVVLGTASQVPTRQRNHNGYLLRWGREGVLFDPGEGTQRQMAFAGVAATDITRIALTHFHGDHCLGLPGIVQRINLDRVAHPVDAYYPASGQEYFDRLCSASSFYRRVDLRTHPIAGPGPLDAPDAPFTIEAVALSHPVEAFGYRLTEPAGVRMLPDRLAALGIHGPRIGELQRAGSLLVDGRTVTVAEVSEPRPGQSFAFVMDTRLCPGVAELAAGVDMLVIEATFLDADAHLAEEYGHLTAGQAARVAADADVRTLVLTHFSQRYRTLDDHRAEAEKHFSGEVVVAEDLHRIPLPPRR.

Histidine 63, histidine 65, aspartate 67, histidine 68, histidine 142, aspartate 209, and histidine 267 together coordinate Zn(2+). Aspartate 67 functions as the Proton acceptor in the catalytic mechanism.

It belongs to the RNase Z family. As to quaternary structure, homodimer. Zn(2+) serves as cofactor.

The catalysed reaction is Endonucleolytic cleavage of RNA, removing extra 3' nucleotides from tRNA precursor, generating 3' termini of tRNAs. A 3'-hydroxy group is left at the tRNA terminus and a 5'-phosphoryl group is left at the trailer molecule.. Functionally, zinc phosphodiesterase, which displays some tRNA 3'-processing endonuclease activity. Probably involved in tRNA maturation, by removing a 3'-trailer from precursor tRNA. This Nocardia farcinica (strain IFM 10152) protein is Ribonuclease Z.